The primary structure comprises 271 residues: Methylcorrinoid:tetrahydrofolate methyltransferase (271 aa).

Residues M1–L247 enclose the Pterin-binding domain.

It belongs to the vitamin-B12 dependent methionine synthase family. The proline betaine:THF methyl transfer system is composed of two methyltransferases, MtpB and MtqA, and the corrinoid protein MtqC. The L-carnitine:THF methyl transfer system is composed of two methyltransferases, MtcB and MtqA, and the corrinoid protein MtqC.

The enzyme catalyses methyl-Co(III)-[quaternary-amine-specific corrinoid protein] + (6S)-5,6,7,8-tetrahydrofolate = Co(I)-[quaternary-amine-specific corrinoid protein] + (6S)-5-methyl-5,6,7,8-tetrahydrofolate + H(+). Functionally, involved in the degradation of the quaternary amines L-proline betaine and L-carnitine. Component of a corrinoid-dependent methyltransferase system that transfers a methyl group from L-proline betaine or L-carnitine to tetrahydrofolate (THF), forming methyl-THF, a key intermediate in the Wood-Ljungdahl acetogenesis pathway. MtqA catalyzes the transfer of a methyl group from the methylated corrinoid protein MtqC to THF, forming methyl-THF. In Eubacterium limosum, this protein is Methylcorrinoid:tetrahydrofolate methyltransferase.